We begin with the raw amino-acid sequence, 270 residues long: Undecaprenyl-diphosphatase 3 (270 aa).

The next 7 helical transmembrane spans lie at 5-25, 42-62, 89-109, 117-137, 192-212, 220-240, and 250-270; these read YYIL…PIPI, IEGF…VLLI, FFFI…GVLF, LKGV…LWII, FSFL…ITDI, TLFV…YISL, and GNLK…LIFL.

The protein belongs to the UppP family.

The protein localises to the cell membrane. It catalyses the reaction di-trans,octa-cis-undecaprenyl diphosphate + H2O = di-trans,octa-cis-undecaprenyl phosphate + phosphate + H(+). Functionally, catalyzes the dephosphorylation of undecaprenyl diphosphate (UPP). Confers resistance to bacitracin. The chain is Undecaprenyl-diphosphatase 3 from Bacillus anthracis.